Here is a 215-residue protein sequence, read N- to C-terminus: Protein Thf1 (215 aa).

A coiled-coil region spans residues 188 to 209 (IELVQETIAAERRKKERRQAEQ).

This sequence belongs to the THF1 family.

May be involved in photosynthetic membrane biogenesis. This Synechococcus sp. (strain CC9902) protein is Protein Thf1.